A 625-amino-acid chain; its full sequence is Protein SUPPRESSOR OF GENE SILENCING 3 (625 aa).

3 disordered regions span residues 1-20 (MSSR…GYRP), 30-148 (AGTR…SAQH), and 161-195 (VDNA…QKSH). The segment covering 54 to 70 (KPGNTSGKTWVSQNSNP) has biased composition (polar residues). Residues 80-94 (GRGSNVSGRGNNVSG) show a composition bias toward low complexity. The span at 161-188 (VDNASEEENDSDALDDSDDDLASDDYDS) shows a compositional bias: acidic residues. Coiled-coil stretches lie at residues 452-533 (KNKL…QQQE) and 564-615 (IEFQ…EQLM).

It belongs to the SGS3 family. As to quaternary structure, interacts with begomoviruses protein V2. Interacts with SGIP1 in cytoplasmic granules.

The protein resides in the cytoplasm. It is found in the perinuclear region. The protein localises to the cytoplasmic granule. Its function is as follows. Required for post-transcriptional gene silencing and natural virus resistance. May bind nucleic acids and is essential for the biogenesis of trans-acting siRNAs but is not required for silencing induced by IR-PTGS. Involved in the juvenile-to-adult transition regulation. In case of begomoviruses infection, it is targeted by the viral protein V2 leading to suppression of post-transcriptional gene silencing. Involved in the mechanisms necessary for quick response to heat and subsequent heritable transgenerational memory of heat acclimation (global warming) such as early flowering and attenuated immunity; this process includes epigenetic regulation as well as post-transcriptional gene silencing (PTGS). In response to heat, HSFA2 is activated and promotes the expression of REF6 which in turn derepresses HSFA2, thus establishing an inheritable feedback loop able to trigger SGIP1 and subsequent SGIP1-mediated SGS3 degradation; this prevents the biosynthesis of trans-acting siRNA (tasiRNA) and leads to the release of HTT5, which drives early flowering but attenuates immunity. This chain is Protein SUPPRESSOR OF GENE SILENCING 3, found in Arabidopsis thaliana (Mouse-ear cress).